The following is a 232-amino-acid chain: 5'-methylthioadenosine/S-adenosylhomocysteine nucleosidase (232 aa).

Glu12 serves as the catalytic Proton acceptor. Residues Gly78, Ile152, and 173-174 (ME) each bind substrate. The active-site Proton donor is Asp197.

The protein belongs to the PNP/UDP phosphorylase family. MtnN subfamily. Homodimer.

It catalyses the reaction S-adenosyl-L-homocysteine + H2O = S-(5-deoxy-D-ribos-5-yl)-L-homocysteine + adenine. The catalysed reaction is S-methyl-5'-thioadenosine + H2O = 5-(methylsulfanyl)-D-ribose + adenine. It carries out the reaction 5'-deoxyadenosine + H2O = 5-deoxy-D-ribose + adenine. It functions in the pathway amino-acid biosynthesis; L-methionine biosynthesis via salvage pathway; S-methyl-5-thio-alpha-D-ribose 1-phosphate from S-methyl-5'-thioadenosine (hydrolase route): step 1/2. Its function is as follows. Catalyzes the irreversible cleavage of the glycosidic bond in both 5'-methylthioadenosine (MTA) and S-adenosylhomocysteine (SAH/AdoHcy) to adenine and the corresponding thioribose, 5'-methylthioribose and S-ribosylhomocysteine, respectively. Also cleaves 5'-deoxyadenosine, a toxic by-product of radical S-adenosylmethionine (SAM) enzymes, into 5-deoxyribose and adenine. Thus, is required for in vivo function of the radical SAM enzymes biotin synthase and lipoic acid synthase, that are inhibited by 5'-deoxyadenosine accumulation. This chain is 5'-methylthioadenosine/S-adenosylhomocysteine nucleosidase, found in Salmonella enteritidis PT4 (strain P125109).